The following is a 206-amino-acid chain: MKRPLIIGVGGPVGAGKTMLIERLTRYLSTKGYSMAAITNDIYTKEDARILLNTSVLPADRIAGVETGGCPHTAIREDASMNFAAIEEMCDKHPDLQLLFLESGGDNLSATFSPDLVDFSIYIIDVAQGEKIPRKGGQGMIKSDLFIINKVDLAPYVGANVEVMKADTLKSRGNKDFFVTNLKTDEGLKSVADWIEKRLQLALLEE.

11–18 (GPVGAGKT) lines the GTP pocket.

It belongs to the SIMIBI class G3E GTPase family. UreG subfamily. As to quaternary structure, homodimer. UreD, UreF and UreG form a complex that acts as a GTP-hydrolysis-dependent molecular chaperone, activating the urease apoprotein by helping to assemble the nickel containing metallocenter of UreC. The UreE protein probably delivers the nickel.

It is found in the cytoplasm. In terms of biological role, facilitates the functional incorporation of the urease nickel metallocenter. This process requires GTP hydrolysis, probably effectuated by UreG. The chain is Urease accessory protein UreG from Ureaplasma parvum serovar 3 (strain ATCC 700970).